The primary structure comprises 296 residues: 4-diphosphocytidyl-2-C-methyl-D-erythritol kinase (296 aa).

The active site involves Lys-12. An ATP-binding site is contributed by 94-104; it reads PAQAGMGGGSS. Asp-136 is an active-site residue.

It belongs to the GHMP kinase family. IspE subfamily.

It catalyses the reaction 4-CDP-2-C-methyl-D-erythritol + ATP = 4-CDP-2-C-methyl-D-erythritol 2-phosphate + ADP + H(+). The protein operates within isoprenoid biosynthesis; isopentenyl diphosphate biosynthesis via DXP pathway; isopentenyl diphosphate from 1-deoxy-D-xylulose 5-phosphate: step 3/6. In terms of biological role, catalyzes the phosphorylation of the position 2 hydroxy group of 4-diphosphocytidyl-2C-methyl-D-erythritol. This is 4-diphosphocytidyl-2-C-methyl-D-erythritol kinase from Variovorax paradoxus (strain S110).